The chain runs to 91 residues: UPF0298 protein M28_Spy0318 (91 aa).

Belongs to the UPF0298 family.

The protein resides in the cytoplasm. In Streptococcus pyogenes serotype M28 (strain MGAS6180), this protein is UPF0298 protein M28_Spy0318.